The chain runs to 152 residues: ARL14 effector protein-like (152 aa).

The segment at 1 to 21 (MNEQSEKNNSIQERHTDHSFP) is disordered.

The chain is ARL14 effector protein-like (ARL14EPL) from Homo sapiens (Human).